A 274-amino-acid polypeptide reads, in one-letter code: Chromatin modification-related protein YNG2 (274 aa).

The segment at 121–194 (EDEMESGPDF…ASTEREGTLD (74 aa)) is disordered. Positions 166–180 (THREKSYNKGDDTAD) are enriched in basic and acidic residues. The PHD-type zinc finger occupies 215–264 (NLYCFCQRVSFGEMVACDGPNCKYEWFHYECVNLTEPPKGTWYCPDCKQE). The Zn(2+) site is built by cysteine 218, cysteine 220, cysteine 231, cysteine 236, histidine 242, cysteine 245, cysteine 258, and cysteine 261.

Belongs to the ING family. As to quaternary structure, interacts with H3K4me3 and to a lesser extent with H3K4me2. Component of the NuA4 histone acetyltransferase complex.

The protein resides in the nucleus. In terms of biological role, component of the NuA4 histone acetyltransferase complex which is involved in transcriptional activation of selected genes principally by acetylation of nucleosomal histone H4 and H2A. The NuA4 complex is also involved in DNA repair. Involved in cell cycle progression and meiosis. This chain is Chromatin modification-related protein YNG2 (YNG2), found in Candida glabrata (strain ATCC 2001 / BCRC 20586 / JCM 3761 / NBRC 0622 / NRRL Y-65 / CBS 138) (Yeast).